The chain runs to 373 residues: Chorismate synthase (373 aa).

Arginine 46 is a binding site for NADP(+). Residues 123-125 (RSS), 251-252 (NA), glycine 295, 310-314 (KPTPS), and arginine 337 each bind FMN.

The protein belongs to the chorismate synthase family. FMNH2 serves as cofactor.

The enzyme catalyses 5-O-(1-carboxyvinyl)-3-phosphoshikimate = chorismate + phosphate. It functions in the pathway metabolic intermediate biosynthesis; chorismate biosynthesis; chorismate from D-erythrose 4-phosphate and phosphoenolpyruvate: step 7/7. Catalyzes the anti-1,4-elimination of the C-3 phosphate and the C-6 proR hydrogen from 5-enolpyruvylshikimate-3-phosphate (EPSP) to yield chorismate, which is the branch point compound that serves as the starting substrate for the three terminal pathways of aromatic amino acid biosynthesis. This reaction introduces a second double bond into the aromatic ring system. The protein is Chorismate synthase of Methanococcus maripaludis (strain C5 / ATCC BAA-1333).